The primary structure comprises 60 residues: Large ribosomal subunit protein uL30 (60 aa).

This sequence belongs to the universal ribosomal protein uL30 family. As to quaternary structure, part of the 50S ribosomal subunit.

The protein is Large ribosomal subunit protein uL30 of Burkholderia ambifaria (strain MC40-6).